The primary structure comprises 360 residues: MRVFNFSAGPAAMPEEVLRQAADEMLDWHGSGMSVMEMSHRGKEFMSIHEAALTDLRDLLGVPASHRILFLQGGGIAENAIVPMNLLGSRKTADFVVTGSWSQKSFTEAKKYGTPHLAATGKTEDGYTRAPVRAEWQLSDDPAYVHLCTNETIDGVETFEIPDLGDVPLVADVSSHILSRPMDVAKYGVLFGGAQKNIGMAGVTLVIVREDLLDRALSICPSAFEWKTIAANNSLYNTPPTYAIYIAGLVFQWLKRQGGLEAIEARNIEKAKLLYDTIDSSSFYLNKVEPAARSRMNVPFFLADETRNEDFLAGAKARGLLQLKGHKSVGGMRASIYNAVPLEGVKALVEYMKDFEQRGA.

Arginine 41 lines the L-glutamate pocket. Positions 101, 152, 172, and 195 each coordinate pyridoxal 5'-phosphate. Residue lysine 196 is modified to N6-(pyridoxal phosphate)lysine. 237–238 (NT) contacts pyridoxal 5'-phosphate.

This sequence belongs to the class-V pyridoxal-phosphate-dependent aminotransferase family. SerC subfamily. Homodimer. The cofactor is pyridoxal 5'-phosphate.

Its subcellular location is the cytoplasm. It catalyses the reaction O-phospho-L-serine + 2-oxoglutarate = 3-phosphooxypyruvate + L-glutamate. The enzyme catalyses 4-(phosphooxy)-L-threonine + 2-oxoglutarate = (R)-3-hydroxy-2-oxo-4-phosphooxybutanoate + L-glutamate. It participates in amino-acid biosynthesis; L-serine biosynthesis; L-serine from 3-phospho-D-glycerate: step 2/3. The protein operates within cofactor biosynthesis; pyridoxine 5'-phosphate biosynthesis; pyridoxine 5'-phosphate from D-erythrose 4-phosphate: step 3/5. Functionally, catalyzes the reversible conversion of 3-phosphohydroxypyruvate to phosphoserine and of 3-hydroxy-2-oxo-4-phosphonooxybutanoate to phosphohydroxythreonine. In Burkholderia lata (strain ATCC 17760 / DSM 23089 / LMG 22485 / NCIMB 9086 / R18194 / 383), this protein is Phosphoserine aminotransferase.